The primary structure comprises 555 residues: ATP-dependent RNA helicase MRH4, mitochondrial (555 aa).

The transit peptide at Met1–Ser25 directs the protein to the mitochondrion. Positions Asp101–Gln108 match the Q motif motif. A Helicase ATP-binding domain is found at Ala144–Leu361. Residue Ala157–Thr164 participates in ATP binding. A DEAD box motif is present at residues Asp309–Asp312. Positions Cys395–Gly555 constitute a Helicase C-terminal domain.

The protein belongs to the DEAD box helicase family. MRH4 subfamily.

The protein localises to the mitochondrion. It catalyses the reaction ATP + H2O = ADP + phosphate + H(+). Functionally, ATP-binding RNA helicase involved in mitochondrial RNA metabolism. Required for maintenance of mitochondrial DNA. This is ATP-dependent RNA helicase MRH4, mitochondrial (MRH4) from Candida albicans (strain SC5314 / ATCC MYA-2876) (Yeast).